A 473-amino-acid chain; its full sequence is Glutamate--tRNA ligase 1 (473 aa).

The short motif at 11–21 is the 'HIGH' region element; it reads PSPTGYLHIGG. Over residues 113–133 the composition is skewed to basic and acidic residues; that stretch reads KARAEGRPPRYDGRWRDRDPS. The disordered stretch occupies residues 113-136; sequence KARAEGRPPRYDGRWRDRDPSEAP. The short motif at 240–244 is the 'KMSKS' region element; sequence KLSKR. ATP is bound at residue lysine 243.

This sequence belongs to the class-I aminoacyl-tRNA synthetase family. Glutamate--tRNA ligase type 1 subfamily. Monomer.

The protein localises to the cytoplasm. It catalyses the reaction tRNA(Glu) + L-glutamate + ATP = L-glutamyl-tRNA(Glu) + AMP + diphosphate. In terms of biological role, catalyzes the attachment of glutamate to tRNA(Glu) in a two-step reaction: glutamate is first activated by ATP to form Glu-AMP and then transferred to the acceptor end of tRNA(Glu). The protein is Glutamate--tRNA ligase 1 of Brucella melitensis biotype 1 (strain ATCC 23456 / CCUG 17765 / NCTC 10094 / 16M).